The primary structure comprises 1287 residues: DENN domain-containing protein 5A (1287 aa).

Residues 57 to 259 (STTEGENFEQ…EVPLPPPGRS (203 aa)) enclose the uDENN domain. The residue at position 193 (Ser-193) is a Phosphoserine. The cDENN domain maps to 278-414 (ELPLFDFPVK…LEFVQEVSEI (137 aa)). In terms of domain architecture, dDENN spans 416 to 598 (MAFGVPPEGN…IMCHDDDDKD (183 aa)). Residues 787–950 (VEENTLIASL…DYFCFTNVFT (164 aa)) enclose the RUN 1 domain. The region spanning 954 to 1062 (IPYHILIVPS…DDGSLERVLV (109 aa)) is the PLAT domain. At Thr-1079 the chain carries Phosphothreonine. Phosphoserine is present on residues Ser-1085, Ser-1087, and Ser-1096. The RUN 2 domain occupies 1134–1280 (TLLLCGECGL…QEFNITLDTS (147 aa)).

This sequence belongs to the RAB6IP1 family. As to quaternary structure, interacts with RAB6A bound to GTP. In terms of tissue distribution, expressed in developing brain and developing neurons.

The protein resides in the golgi apparatus membrane. Its function is as follows. Guanine nucleotide exchange factor (GEF) which may activate RAB6A and RAB39A and/or RAB39B. Promotes the exchange of GDP to GTP, converting inactive GDP-bound Rab proteins into their active GTP-bound form. Involved in the negative regulation of neurite outgrowth. The chain is DENN domain-containing protein 5A (Dennd5a) from Rattus norvegicus (Rat).